The chain runs to 1268 residues: MEAVKTFNSELYSLNDYKPPISKAKMTQITKAAIKAIKFYKHVVQSVEKFIQKCKPEYKVPGLYVIDSIVRQSRHQVGQEKDVCAPRFSNNIISTFQNLYRCPGDDKSKIVRVLNLWQKNNVFKSEIIQPLLDMAAGIPPPVVTPVLASTTVAMSNTPGTPVTPVTPANVVQGLPDPWVSQITNTDTLAAVAQILQSPQGQQLQQLIQTLQIQQQKPQPSILQALDAGLVVQLQALTAQLTAAAAAANTLTPLDQGVSFNKKLMDRFDFGEDSEHSEESKKEIPTPQLSHVSESVNNSIFHQIAEQLQQQNLEQLRQQLLEQQQPQKVTPQDSQEGAFGSEHSASPSQGSSQQHFLEPEANLDDSIDIQQQDMDIDEGQDVVEEEIFEPEAKKVAVRSRSRTHSRSRSRSPRKRRSRSRSGSRKRKHRKRSRSRSRERKRKSSRSYSSERRAREREKERQKKGLPPVRSKTLSVCSTTLWVGQVDKKATQQDLTNLFEEFGQIESINMIPPRGCAYVCMVHRQDSFRALQKLSSGSYKIGSKVIKIAWALNKGVKTEYKQFWDVDLGVTYIPWEKVKVDDLDGFAEGGMIDQETVNAEWETVKTSEPVKETVQTTQSPAAVEKETVVTTQSEVFPPPVTMLQIPVAPTVPAVSLVPPAFPVSMPVPPPGFSPIPPPPFLRASFNPSQPPPGFMPPPVPPPVVPPPAIPPVVPTSLVQPPLSMTPETVKDVGFGSLVLPGGSVAGNLAPSTLPAGNVFNPPSKAEPEEKVPHLTEHQIPSGENTRPVIPSDIPSSAPMLAQPPGASNTSGILCVQRPNVSSNSEILGVRPANVSNSAAIMGAQPPNMLNNSGILGIQPPNVSSGSGLLGVLPPNLPNNSGLVGLQPPNVTNPAGLLGTQPPIGPQNLPPLTIPAQRMPALPMLDIRPGLIAQAPGPRFPLLQPGIPPQRGIPPPSVLDAALHPPPRGPFPPGDLFSQPERPFLAPGRPNIDSVPNPDKRIPLGNDNIQQEGDRDYRFPPIETREGINRPPPVDVRDVVGRPIDPREGPGRPPLDGRDHFGRPPVDMRETLVRPGLDHLGRRDHFGFPPEKPWGPRDFDEREHRVLPVFGGPKGLHEERGRFRAGNYRFDPRSGPWNRGFGQEVHRDFDDRRRPWERQRDRDDRDFDFCREINGNRLGRDRIQNTWVPPPHARVFDYFEGATSQRKGENVPQVNGGNTERHAPPPPLPVQKDPELYEKLASSGDADKEESGTAAGVESEAVVESTETEGT.

In terms of domain architecture, CID spans 1–139; that stretch reads MEAVKTFNSE…PLLDMAAGIP (139 aa). Position 6 is a phosphothreonine (threonine 6). Lysine 18 participates in a covalent cross-link: Glycyl lysine isopeptide (Lys-Gly) (interchain with G-Cter in SUMO1). Serine 273 is subject to Phosphoserine. 2 disordered regions span residues 322-355 and 385-469; these read QQQPQKVTPQDSQEGAFGSEHSASPSQGSSQQHF and EIFE…PVRS. Polar residues predominate over residues 342–354; it reads HSASPSQGSSQQH. A compositionally biased stretch (basic residues) spans 394-443; sequence VAVRSRSRTHSRSRSRSPRKRRSRSRSGSRKRKHRKRSRSRSRERKRKSS. Basic and acidic residues predominate over residues 447 to 461; the sequence is SSERRAREREKERQK. The RRM domain maps to 477–551; it reads TTLWVGQVDK…KVIKIAWALN (75 aa). A Phosphothreonine modification is found at threonine 615. Position 617 is a phosphoserine (serine 617). Residues 753–808 are disordered; it reads AGNVFNPPSKAEPEEKVPHLTEHQIPSGENTRPVIPSDIPSSAPMLAQPPGASNTS. Residues 763-774 are compositionally biased toward basic and acidic residues; the sequence is AEPEEKVPHLTE. Asymmetric dimethylarginine occurs at positions 915, 925, and 936. A disordered region spans residues 947–1063; sequence QRGIPPPSVL…GRDHFGRPPV (117 aa). A compositionally biased stretch (pro residues) spans 961-970; that stretch reads HPPPRGPFPP. Basic and acidic residues-rich tracts occupy residues 1009 to 1025 and 1032 to 1063; these read EGDRDYRFPPIETREGI and DVRDVVGRPIDPREGPGRPPLDGRDHFGRPPV. Arginine 1071 carries the asymmetric dimethylarginine modification. The interval 1199–1268 is disordered; the sequence is ATSQRKGENV…VVESTETEGT (70 aa). A compositionally biased stretch (low complexity) spans 1249–1262; sequence GTAAGVESEAVVES.

In terms of assembly, interacts with POLR2A; via C-terminal heptapeptide repeat domain (CTD) phosphorylated at 'Ser-2' and 'Ser-5'. Identified in a complex with CDC5L and other spliceosomal proteins.

It localises to the nucleus. The protein localises to the nucleus matrix. In terms of biological role, anti-terminator protein required to prevent early mRNA termination during transcription. Together with SCAF4, acts by suppressing the use of early, alternative poly(A) sites, thereby preventing the accumulation of non-functional truncated proteins. Mechanistically, associates with the phosphorylated C-terminal heptapeptide repeat domain (CTD) of the largest RNA polymerase II subunit (POLR2A), and subsequently binds nascent RNA upstream of early polyadenylation sites to prevent premature mRNA transcript cleavage and polyadenylation. Independently of SCAF4, also acts as a positive regulator of transcript elongation. This chain is SR-related and CTD-associated factor 8, found in Rattus norvegicus (Rat).